The sequence spans 289 residues: MGKYIRKSKIDGAGAGAGGGGGGGGGGESSIALMDVVSPSSSSSLGVLTRAKSLALQQQQQRCLLQKPSSPSSLPPTSASPNPPSKQKMKKKQQQMNDCGSYLQLRSRRLQKKPPIVVIRSTKRRKQQRRNETCGRNPNPRSNLDSIRGDGSRSDSVSESVVFGKDKDLISEINKDPTFGQNFFDLEEEHTQSFNRTTRESTPCSLIRRPEIMTTPGSSTKLNICVSESNQREDSLSRSHRRRPTTPEMDEFFSGAEEEQQKQFIEKYNFDPVNEQPLPGRFEWTKVDD.

3 disordered regions span residues 1–31, 56–160, and 227–248; these read MGKY…ESSI, LQQQ…VSES, and SESN…TTPE. Residues 13 to 28 are compositionally biased toward gly residues; sequence AGAGAGGGGGGGGGGE. Positions 56–80 are enriched in low complexity; it reads LQQQQQRCLLQKPSSPSSLPPTSAS. Polar residues predominate over residues 134-144; the sequence is CGRNPNPRSNL.

This sequence belongs to the CDI family. ICK/KRP subfamily. Specifically interacts with CDKA-1, but not with CDKB1-1. Interacts with CYCD4-1. Binds to FBL17. In terms of tissue distribution, expressed in leaves and flowers and at lower levels in roots.

It localises to the nucleus. Its subcellular location is the nucleoplasm. Functionally, binds and inhibits CYCD2-1/CDKA-1 complex kinase activity. May target specifically CDKA-1. This is Cyclin-dependent kinase inhibitor 4 (KRP4) from Arabidopsis thaliana (Mouse-ear cress).